The primary structure comprises 350 residues: UDP-N-acetylenolpyruvoylglucosamine reductase (350 aa).

Positions 24 to 195 constitute an FAD-binding PCMH-type domain; that stretch reads HVEATARWLL…VAVEFNLPLL (172 aa). Arginine 172 is a catalytic residue. The active-site Proton donor is serine 245. Glutamate 342 is a catalytic residue.

The protein belongs to the MurB family. It depends on FAD as a cofactor.

It localises to the cytoplasm. It catalyses the reaction UDP-N-acetyl-alpha-D-muramate + NADP(+) = UDP-N-acetyl-3-O-(1-carboxyvinyl)-alpha-D-glucosamine + NADPH + H(+). It participates in cell wall biogenesis; peptidoglycan biosynthesis. Its function is as follows. Cell wall formation. This is UDP-N-acetylenolpyruvoylglucosamine reductase from Xanthomonas oryzae pv. oryzae (strain MAFF 311018).